We begin with the raw amino-acid sequence, 440 residues long: Thymidine phosphorylase (440 aa).

Belongs to the thymidine/pyrimidine-nucleoside phosphorylase family. As to quaternary structure, homodimer.

The catalysed reaction is thymidine + phosphate = 2-deoxy-alpha-D-ribose 1-phosphate + thymine. It participates in pyrimidine metabolism; dTMP biosynthesis via salvage pathway; dTMP from thymine: step 1/2. Functionally, the enzymes which catalyze the reversible phosphorolysis of pyrimidine nucleosides are involved in the degradation of these compounds and in their utilization as carbon and energy sources, or in the rescue of pyrimidine bases for nucleotide synthesis. In Serratia proteamaculans (strain 568), this protein is Thymidine phosphorylase.